The sequence spans 520 residues: MATLTNGQVDAAVHGGAASTNGLVNGISHTHSPASCATIPMKDHDAIKLFIGQIPRNLDEKDLRPLFEEFGKIYELTVLKDRFTGMHKGCAFLTYCARESALKAQTALHEQKTLPGMNRPIQVKPADSESRGEDRKLFVGMLNKQQCEDDVRRLFESFGSIEECTILRGPDGNSKGCAFVKYSTHAEAQAAISALHGSQTMPGASSSLVVKFADTDKERTIRRMQQMAGQMGIFNPMALQFGAYGAYAQVQQQAALMASVGQGGYLSPMAAFAAAQMQHMATINGLPGAPMTPTSGGSTPPGITAPTVTSIPSPISVNGFTGLPPPQANGQAPAEAMFTNGIHPYPVLQEVVFREDSEKGGLGVAQRSCFGVQGSCFLSSLSEAQSPTAADPLQQAYAGVQQYAAFPAAYGQISQAFPQPPPIIPQQQREGPEGCNLFIYHLPQEFGDGELMQMFLPFGNVISSKVFVDRATNQSKCFGFVSFDNPGSAQAAIQSMNGFQIGMKRLKVQLKRPKDANRPY.

RRM domains lie at 47 to 128 (IKLF…PADS), 135 to 215 (RKLF…FADT), and 435 to 513 (CNLF…LKRP).

The protein belongs to the CELF/BRUNOL family.

Its subcellular location is the nucleus. The protein resides in the cytoplasm. In terms of biological role, RNA-binding protein that may be implicated in the regulation of pre-mRNA alternative splicing. The polypeptide is CUGBP Elav-like family member 4 (celf4) (Danio rerio (Zebrafish)).